A 720-amino-acid chain; its full sequence is Phosphate acetyltransferase (720 aa).

A phosphate acetyltransferase region spans residues 389–720 (AFRHELVQKS…LEAKAAALAS (332 aa)).

This sequence in the N-terminal section; belongs to the CobB/CobQ family. The protein in the C-terminal section; belongs to the phosphate acetyltransferase and butyryltransferase family. In terms of assembly, homohexamer.

The protein localises to the cytoplasm. It carries out the reaction acetyl-CoA + phosphate = acetyl phosphate + CoA. Its pathway is metabolic intermediate biosynthesis; acetyl-CoA biosynthesis; acetyl-CoA from acetate: step 2/2. Involved in acetate metabolism. The polypeptide is Phosphate acetyltransferase (pta) (Acinetobacter baylyi (strain ATCC 33305 / BD413 / ADP1)).